We begin with the raw amino-acid sequence, 458 residues long: Enolase (458 aa).

Q177 provides a ligand contact to (2R)-2-phosphoglycerate. The Proton donor role is filled by E219. Mg(2+) is bound by residues D256, E310, and D337. Residues K362, R391, S392, and K413 each coordinate (2R)-2-phosphoglycerate. K362 (proton acceptor) is an active-site residue.

It belongs to the enolase family. Requires Mg(2+) as cofactor.

It localises to the cytoplasm. The protein localises to the secreted. The protein resides in the cell surface. It carries out the reaction (2R)-2-phosphoglycerate = phosphoenolpyruvate + H2O. It functions in the pathway carbohydrate degradation; glycolysis; pyruvate from D-glyceraldehyde 3-phosphate: step 4/5. Its function is as follows. Catalyzes the reversible conversion of 2-phosphoglycerate (2-PG) into phosphoenolpyruvate (PEP). It is essential for the degradation of carbohydrates via glycolysis. This is Enolase from Mycoplasma genitalium (strain ATCC 33530 / DSM 19775 / NCTC 10195 / G37) (Mycoplasmoides genitalium).